The chain runs to 124 residues: Autophagy-related protein 8 (124 aa).

The Phosphatidylethanolamine amidated glycine moiety is linked to residue G116. Residues 117 to 124 constitute a propeptide, removed in mature form; the sequence is GAGPLLEK.

This sequence belongs to the ATG8 family. As to quaternary structure, conjugation to phosphatidylethanolamine (PE) leads to homodimerization. Interacts with ATG1, ATG3, ATG4, ATG7 and ATG12. The C-terminal 8 residues of ATG8 are removed by ATG4 to expose Gly-116 at the C-terminus. This Gly-116 forms then a thioester bond with the 'Cys-550' of ATG7 (E1-like activating enzyme) before being transferred to the 'Cys-244' of ATG3 (the specific E2 conjugating enzyme), in order to be finally amidated with phosphatidylethanolamine. This lipid modification anchors ATG8 to membranes and can be reversed by ATG4, releasing soluble ATG8.

The protein localises to the cytoplasmic vesicle. It is found in the cvt vesicle membrane. Its subcellular location is the autophagosome membrane. The protein resides in the vacuole membrane. Ubiquitin-like modifier involved in cytoplasm to vacuole transport (Cvt) vesicles and autophagosome formation. With ATG4, mediates the delivery of the vesicles and autophagosomes to the vacuole via the microtubule cytoskeleton. Required for selective autophagic degradation of the nucleus (nucleophagy) as well as for mitophagy which contributes to regulate mitochondrial quantity and quality by eliminating the mitochondria to a basal level to fulfill cellular energy requirements and preventing excess ROS production. Also participates in membrane fusion events that take place in the early secretory pathway. Also involved in endoplasmic reticulum-specific autophagic process and is essential for the survival of cells subjected to severe ER stress. The ATG8-PE conjugate mediates tethering between adjacent membranes and stimulates membrane hemifusion, leading to expansion of the autophagosomal membrane during autophagy. Moreover not only conjugation, but also subsequent ATG8-PE deconjugation is an important step required to facilitate multiple events during macroautophagy, and especially for efficient autophagosome biogenesis, the assembly of ATG9-containing tubulovesicular clusters into phagophores/autophagosomes, and for the disassembly of PAS-associated ATG components. The protein is Autophagy-related protein 8 of Kluyveromyces marxianus (strain DMKU3-1042 / BCC 29191 / NBRC 104275) (Yeast).